Here is a 426-residue protein sequence, read N- to C-terminus: MTEHTSSYYAASANKYAPFDTLNESITCDVCVVGGGYTGLSSALHLAEAGFDVVVLEASRIGFGASGRNGGQLVNSYSRDIDVIEKSYGMDTARMLGSMMFEGGEIIRERIKRYQIDCDYRPGGLFVAMNDKQLATLEEQKENWERYGNKQLELLDANAIRREVASDRYTGALLDHSGGHIHPLNLAIGEADAIRLNGGRVYELSAVTQIQHTTPAVVRTAKGQVTAKYVIVAGNAYLGDKVEPELAKRSMPCGTQVITTERLSEDLARSLIPKNYCVEDCNYLLDYYRLTADNRLLYGGGVVYGARDPDDVERLVVPKLLKTFPQLKGVKIDYRWTGNFLLTLSRMPQFGRLDTNIYYMQGYSGHGVTCTHLAGRLIAELLRGDAERFDAFANLPHYPFPGGRTLRVPFTAMGAAYYSLRDRLGV.

Belongs to the gamma-glutamylputrescine oxidoreductase family.

It carries out the reaction gamma-L-glutamylputrescine + O2 + H2O = 4-(gamma-L-glutamylamino)butanal + H2O2 + NH4(+). Its pathway is amine and polyamine degradation; putrescine degradation; 4-aminobutanoate from putrescine: step 2/4. Involved in the breakdown of putrescine via the oxidation of L-glutamylputrescine. The protein is Gamma-glutamylputrescine oxidoreductase (puuB) of Escherichia coli (strain K12).